A 131-amino-acid polypeptide reads, in one-letter code: Peptide methionine sulfoxide reductase MsrB (131 aa).

Positions 8 to 130 (LDEWRSMLDP…NSVCIDLRPR (123 aa)) constitute a MsrB domain. 4 residues coordinate Zn(2+): Cys47, Cys50, Cys96, and Cys99. The active-site Nucleophile is Cys119.

It belongs to the MsrB Met sulfoxide reductase family. The cofactor is Zn(2+).

The catalysed reaction is L-methionyl-[protein] + [thioredoxin]-disulfide + H2O = L-methionyl-(R)-S-oxide-[protein] + [thioredoxin]-dithiol. The chain is Peptide methionine sulfoxide reductase MsrB from Pseudomonas putida (strain ATCC 700007 / DSM 6899 / JCM 31910 / BCRC 17059 / LMG 24140 / F1).